The chain runs to 300 residues: UPF0282 protein TGAM_0379 (300 aa).

It belongs to the UPF0282 family.

The chain is UPF0282 protein TGAM_0379 from Thermococcus gammatolerans (strain DSM 15229 / JCM 11827 / EJ3).